A 343-amino-acid polypeptide reads, in one-letter code: Dihydroorotase (343 aa).

Residues H14 and H16 each coordinate Zn(2+). Substrate contacts are provided by residues 16-18 and N42; that span reads HVR. Zn(2+) is bound by residues K98, H135, and H173. An N6-carboxylysine modification is found at K98. H135 lines the substrate pocket. L219 provides a ligand contact to substrate. Position 247 (D247) interacts with Zn(2+). The active site involves D247. H251 and A263 together coordinate substrate.

Belongs to the metallo-dependent hydrolases superfamily. DHOase family. Class II DHOase subfamily. In terms of assembly, homodimer. It depends on Zn(2+) as a cofactor.

It catalyses the reaction (S)-dihydroorotate + H2O = N-carbamoyl-L-aspartate + H(+). It functions in the pathway pyrimidine metabolism; UMP biosynthesis via de novo pathway; (S)-dihydroorotate from bicarbonate: step 3/3. In terms of biological role, catalyzes the reversible cyclization of carbamoyl aspartate to dihydroorotate. This Marinobacter nauticus (strain ATCC 700491 / DSM 11845 / VT8) (Marinobacter aquaeolei) protein is Dihydroorotase.